Consider the following 343-residue polypeptide: Anthranilate phosphoribosyltransferase (343 aa).

Residues Gly81, 84–85, 91–94, 109–117, and Ser121 contribute to the 5-phospho-alpha-D-ribose 1-diphosphate site; these read GD, NVST, and KHGNRSVSS. Position 81 (Gly81) interacts with anthranilate. Ser93 contributes to the Mg(2+) binding site. Asn112 provides a ligand contact to anthranilate. Arg167 is an anthranilate binding site. Positions 226 and 227 each coordinate Mg(2+).

Belongs to the anthranilate phosphoribosyltransferase family. Homodimer. Mg(2+) serves as cofactor.

The enzyme catalyses N-(5-phospho-beta-D-ribosyl)anthranilate + diphosphate = 5-phospho-alpha-D-ribose 1-diphosphate + anthranilate. It participates in amino-acid biosynthesis; L-tryptophan biosynthesis; L-tryptophan from chorismate: step 2/5. In terms of biological role, catalyzes the transfer of the phosphoribosyl group of 5-phosphorylribose-1-pyrophosphate (PRPP) to anthranilate to yield N-(5'-phosphoribosyl)-anthranilate (PRA). The polypeptide is Anthranilate phosphoribosyltransferase (Chromohalobacter salexigens (strain ATCC BAA-138 / DSM 3043 / CIP 106854 / NCIMB 13768 / 1H11)).